The chain runs to 254 residues: Acetyl-coenzyme A carboxylase carboxyl transferase subunit beta (254 aa).

One can recognise a CoA carboxyltransferase N-terminal domain in the interval 1-254 (MWLRCPHCHQ…LLKTGSVANE (254 aa)). The Zn(2+) site is built by cysteine 5, cysteine 8, cysteine 23, and cysteine 26. The segment at 5–26 (CPHCHQLLFAKQLTQYAVCPNC) adopts a C4-type zinc-finger fold.

Belongs to the AccD/PCCB family. Acetyl-CoA carboxylase is a heterohexamer composed of biotin carboxyl carrier protein (AccB), biotin carboxylase (AccC) and two subunits each of ACCase subunit alpha (AccA) and ACCase subunit beta (AccD). The cofactor is Zn(2+).

The protein localises to the cytoplasm. The enzyme catalyses N(6)-carboxybiotinyl-L-lysyl-[protein] + acetyl-CoA = N(6)-biotinyl-L-lysyl-[protein] + malonyl-CoA. It participates in lipid metabolism; malonyl-CoA biosynthesis; malonyl-CoA from acetyl-CoA: step 1/1. Functionally, component of the acetyl coenzyme A carboxylase (ACC) complex. Biotin carboxylase (BC) catalyzes the carboxylation of biotin on its carrier protein (BCCP) and then the CO(2) group is transferred by the transcarboxylase to acetyl-CoA to form malonyl-CoA. The sequence is that of Acetyl-coenzyme A carboxylase carboxyl transferase subunit beta from Limosilactobacillus reuteri (strain DSM 20016) (Lactobacillus reuteri).